A 349-amino-acid chain; its full sequence is MRIALLAGDGIGPEITAEAVKILKAVVGQEIEFDEALIGGAAWKVTGSPLPEETLKLCKNSDAILFGSVGDPECDHLERALRPEQAILGLRKELDLFANLRPARLFPELQAESPLKENIVTGTDLMIVRELTGDVYFGTPRGQRKDDQNRREGFDTMRYNEDEVKRIARIGFETARSRSGNLCSIDKSNVLETSQLWRTVVLEIAQEYPDVELSHMYVDNAAMQLVRAPDQFDVIVTGNLFGDILSDLASACVGSIGLLPSASLNSEGKGLYEPIHGSAPDIAGLGKANPLATILSGAMMLRYSLKREADADRIEKAVSTALEKGARTADLGGKMTTSEMGNAVLAALN.

Substrate is bound by residues Arg-91, Arg-101, Arg-129, and Asp-219. Residues Asp-219, Asp-243, and Asp-247 each contribute to the Mg(2+) site. 277–289 (GSAPDIAGLGKAN) contacts NAD(+).

It belongs to the isocitrate and isopropylmalate dehydrogenases family. LeuB type 1 subfamily. Homodimer. It depends on Mg(2+) as a cofactor. The cofactor is Mn(2+).

It localises to the cytoplasm. The enzyme catalyses (2R,3S)-3-isopropylmalate + NAD(+) = 4-methyl-2-oxopentanoate + CO2 + NADH. Its pathway is amino-acid biosynthesis; L-leucine biosynthesis; L-leucine from 3-methyl-2-oxobutanoate: step 3/4. Catalyzes the oxidation of 3-carboxy-2-hydroxy-4-methylpentanoate (3-isopropylmalate) to 3-carboxy-4-methyl-2-oxopentanoate. The product decarboxylates to 4-methyl-2 oxopentanoate. This Zymomonas mobilis subsp. mobilis (strain ATCC 31821 / ZM4 / CP4) protein is 3-isopropylmalate dehydrogenase.